A 378-amino-acid polypeptide reads, in one-letter code: Flagellar motor switch phosphatase FliY (378 aa).

Residues 225-271 form a disordered region; the sequence is ESAEEEETVQPEVTYEQPKEPVTPEPRIEPKQQQQPPKRQGTAKKAA. A compositionally biased stretch (low complexity) spans 255–264; the sequence is KQQQQPPKRQ.

Belongs to the FliN/MopA/SpaO family.

It is found in the cell membrane. Component of the flagellar switch. Binds CheY-P and increases its hydrolysis rate in vitro. May function constitutively to remove CheY-P around the flagellar switch to maintain an optimal level of CheY-P whereas CheC may function after addition of an attractant to cope with increased levels of CheY-P. The polypeptide is Flagellar motor switch phosphatase FliY (fliY) (Bacillus subtilis (strain 168)).